The chain runs to 595 residues: Beta-(1--&gt;2)glucan export ATP-binding/permease protein NdvA (595 aa).

In terms of domain architecture, ABC transmembrane type-1 spans 21 to 301; it reads SLLICAANVM…MSNFINLTVS (281 aa). A run of 5 helical transmembrane segments spans residues 22 to 42, 55 to 75, 128 to 148, 152 to 172, and 248 to 268; these read LLIC…PILF, IILT…AYVL, AIWL…FILI, FNMN…YVLI, and TAST…VAKG. One can recognise an ABC transporter domain in the interval 335–569; that stretch reads VQFHHVTYKF…GGRFYKLLKA (235 aa). 368–375 provides a ligand contact to ATP; it reads GPTGAGKT.

This sequence belongs to the ABC transporter superfamily. Beta-(1--&gt;2)glucan exporter (TC 3.A.1.108.1) family. In terms of assembly, homodimer.

It is found in the cell inner membrane. It catalyses the reaction [(1-&gt;2)-beta-D-glucosyl](n)(in) + ATP + H2O = [(1-&gt;2)-beta-D-glucosyl](n)(out) + ADP + phosphate + H(+). In terms of biological role, involved in beta-(1--&gt;2)glucan export. Transmembrane domains (TMD) form a pore in the inner membrane and the ATP-binding domain (NBD) is responsible for energy generation. This Bartonella quintana (strain Toulouse) (Rochalimaea quintana) protein is Beta-(1--&gt;2)glucan export ATP-binding/permease protein NdvA.